A 370-amino-acid chain; its full sequence is Erythronate-4-phosphate dehydrogenase (370 aa).

Positions 45 and 66 each coordinate substrate. NAD(+) contacts are provided by D142 and T169. The active site involves R202. D228 provides a ligand contact to NAD(+). E233 is an active-site residue. Residue H250 is the Proton donor of the active site. G253 contributes to the NAD(+) binding site. Residue Y254 participates in substrate binding.

This sequence belongs to the D-isomer specific 2-hydroxyacid dehydrogenase family. PdxB subfamily. In terms of assembly, homodimer.

The protein localises to the cytoplasm. It carries out the reaction 4-phospho-D-erythronate + NAD(+) = (R)-3-hydroxy-2-oxo-4-phosphooxybutanoate + NADH + H(+). It functions in the pathway cofactor biosynthesis; pyridoxine 5'-phosphate biosynthesis; pyridoxine 5'-phosphate from D-erythrose 4-phosphate: step 2/5. In terms of biological role, catalyzes the oxidation of erythronate-4-phosphate to 3-hydroxy-2-oxo-4-phosphonooxybutanoate. This is Erythronate-4-phosphate dehydrogenase from Teredinibacter turnerae (strain ATCC 39867 / T7901).